The following is a 331-amino-acid chain: UPF0194 membrane protein YbhG (331 aa).

The N-terminal stretch at 1-15 (MKKPVVIGLAVVVLA) is a signal peptide. Residues 107-208 (EEIAQAAAAV…LNLQDSTLIA (102 aa)) adopt a coiled-coil conformation.

Belongs to the UPF0194 family.

The protein localises to the periplasm. The sequence is that of UPF0194 membrane protein YbhG from Escherichia coli O157:H7 (strain EC4115 / EHEC).